We begin with the raw amino-acid sequence, 379 residues long: Cytochrome b (379 aa).

4 helical membrane passes run 33 to 53, 77 to 98, 113 to 133, and 178 to 198; these read FGSL…FLAM, WLIR…YLHI, WNIG…GYVL, and FFAF…VHLL. Positions 83 and 97 each coordinate heme b. Heme b-binding residues include His182 and His196. His201 lines the a ubiquinone pocket. Transmembrane regions (helical) follow at residues 226 to 246, 288 to 308, 320 to 340, and 347 to 367; these read TKDF…VLFF, MGGV…PHIQ, ISQF…WIGG, and FIII…AFLP.

This sequence belongs to the cytochrome b family. The cytochrome bc1 complex contains 11 subunits: 3 respiratory subunits (MT-CYB, CYC1 and UQCRFS1), 2 core proteins (UQCRC1 and UQCRC2) and 6 low-molecular weight proteins (UQCRH/QCR6, UQCRB/QCR7, UQCRQ/QCR8, UQCR10/QCR9, UQCR11/QCR10 and a cleavage product of UQCRFS1). This cytochrome bc1 complex then forms a dimer. The cofactor is heme b.

The protein localises to the mitochondrion inner membrane. In terms of biological role, component of the ubiquinol-cytochrome c reductase complex (complex III or cytochrome b-c1 complex) that is part of the mitochondrial respiratory chain. The b-c1 complex mediates electron transfer from ubiquinol to cytochrome c. Contributes to the generation of a proton gradient across the mitochondrial membrane that is then used for ATP synthesis. The chain is Cytochrome b (MT-CYB) from Dipodomys ordii (Ord's kangaroo rat).